The following is a 245-amino-acid chain: Adenosine 5'-phosphosulfate reductase (245 aa).

[4Fe-4S] cluster is bound by residues C124, C125, C205, and C208. C231 acts as the Nucleophile; cysteine thiosulfonate intermediate in catalysis.

This sequence belongs to the PAPS reductase family. CysH subfamily. Requires [4Fe-4S] cluster as cofactor.

It localises to the cytoplasm. The catalysed reaction is [thioredoxin]-disulfide + sulfite + AMP + 2 H(+) = adenosine 5'-phosphosulfate + [thioredoxin]-dithiol. It participates in sulfur metabolism; hydrogen sulfide biosynthesis; sulfite from sulfate. In terms of biological role, catalyzes the formation of sulfite from adenosine 5'-phosphosulfate (APS) using thioredoxin as an electron donor. The protein is Adenosine 5'-phosphosulfate reductase of Chelativorans sp. (strain BNC1).